Here is a 339-residue protein sequence, read N- to C-terminus: tRNA N6-adenosine threonylcarbamoyltransferase (339 aa).

Positions 111 and 115 each coordinate Fe cation. Substrate is bound by residues 134–138 (LVSGG), Asp-167, Gly-180, and Asn-272. Asp-300 lines the Fe cation pocket.

Belongs to the KAE1 / TsaD family. Requires Fe(2+) as cofactor.

The protein resides in the cytoplasm. The enzyme catalyses L-threonylcarbamoyladenylate + adenosine(37) in tRNA = N(6)-L-threonylcarbamoyladenosine(37) in tRNA + AMP + H(+). Required for the formation of a threonylcarbamoyl group on adenosine at position 37 (t(6)A37) in tRNAs that read codons beginning with adenine. Is involved in the transfer of the threonylcarbamoyl moiety of threonylcarbamoyl-AMP (TC-AMP) to the N6 group of A37, together with TsaE and TsaB. TsaD likely plays a direct catalytic role in this reaction. In Vibrio vulnificus (strain YJ016), this protein is tRNA N6-adenosine threonylcarbamoyltransferase.